The following is a 303-amino-acid chain: Epimerase family protein YfhF (303 aa).

This sequence belongs to the NAD(P)-dependent epimerase/dehydratase family. SDR39U1 subfamily.

The chain is Epimerase family protein YfhF (yfhF) from Bacillus subtilis (strain 168).